A 128-amino-acid polypeptide reads, in one-letter code: Glycine cleavage system H protein (128 aa).

Residues 24–106 form the Lipoyl-binding domain; it reads VYSVGITEHA…YTDGWLFSIK (83 aa). Lys65 carries the N6-lipoyllysine modification.

This sequence belongs to the GcvH family. In terms of assembly, the glycine cleavage system is composed of four proteins: P, T, L and H. (R)-lipoate is required as a cofactor.

Its function is as follows. The glycine cleavage system catalyzes the degradation of glycine. The H protein shuttles the methylamine group of glycine from the P protein to the T protein. The chain is Glycine cleavage system H protein from Yersinia pseudotuberculosis serotype O:1b (strain IP 31758).